A 243-amino-acid polypeptide reads, in one-letter code: Large ribosomal subunit protein uL30 (243 aa).

The disordered stretch occupies residues 1-31; sequence MADKILTPESQLKKSKAQQKSAEQVAAERAA. Over residues 18 to 28 the composition is skewed to low complexity; that stretch reads QQKSAEQVAAE.

Belongs to the universal ribosomal protein uL30 family.

The polypeptide is Large ribosomal subunit protein uL30 (RPL7) (Eremothecium gossypii (strain ATCC 10895 / CBS 109.51 / FGSC 9923 / NRRL Y-1056) (Yeast)).